Here is a 262-residue protein sequence, read N- to C-terminus: uncharacterized protein (262 aa).

Helical transmembrane passes span 42-62 (IAKF…TVLN), 71-91 (IINI…LLYF), 115-135 (IGLA…MELI), 145-165 (VVSY…CCFN), 185-205 (LWAY…YSNH), 206-226 (PLMI…PFMI), and 235-255 (AYPS…NYAI).

The protein localises to the membrane. This is an uncharacterized protein from Acanthamoeba polyphaga mimivirus (APMV).